We begin with the raw amino-acid sequence, 443 residues long: Glutamate--tRNA ligase 2 (443 aa).

A 'HIGH' region motif is present at residues 7–17 (PSPTGLIHVGN). Positions 240 to 244 (KLSKR) match the 'KMSKS' region motif. Residue Lys-243 participates in ATP binding.

This sequence belongs to the class-I aminoacyl-tRNA synthetase family. Glutamate--tRNA ligase type 1 subfamily. Monomer.

The protein localises to the cytoplasm. The enzyme catalyses tRNA(Glu) + L-glutamate + ATP = L-glutamyl-tRNA(Glu) + AMP + diphosphate. In terms of biological role, catalyzes the attachment of glutamate to tRNA(Glu) in a two-step reaction: glutamate is first activated by ATP to form Glu-AMP and then transferred to the acceptor end of tRNA(Glu). This chain is Glutamate--tRNA ligase 2, found in Gluconacetobacter diazotrophicus (strain ATCC 49037 / DSM 5601 / CCUG 37298 / CIP 103539 / LMG 7603 / PAl5).